Consider the following 82-residue polypeptide: Small ribosomal subunit protein bS16 (82 aa).

The protein belongs to the bacterial ribosomal protein bS16 family.

In Vibrio atlanticus (strain LGP32) (Vibrio splendidus (strain Mel32)), this protein is Small ribosomal subunit protein bS16.